The primary structure comprises 494 residues: DBIRD complex subunit ZNF326 (494 aa).

Disordered stretches follow at residues 1–22 (MDRE…QSFS), 147–170 (AFGG…RGQM), and 202–264 (KMAP…NSEK). A compositionally biased stretch (polar residues) spans 7–22 (SYNQRSVNSYGNQSFS). The Bipartite nuclear localization signal motif lies at 200 to 221 (KRKMAPPFKPVGFFGKKQKLSK). C2H2 AKAP95-type zinc fingers lie at residues 273–295 (CSFC…SATH) and 365–388 (CSAC…SADH). The tract at residues 429 to 494 (PFETQPDEQQ…CDPLTTTDEV (66 aa)) is disordered. Acidic residues predominate over residues 433–451 (QPDEQQQEQEEEEEEEEQQ).

This sequence belongs to the AKAP95 family. In terms of assembly, component of the DBIRD complex.

The protein localises to the nucleus. In terms of biological role, core component of the DBIRD complex, a multiprotein complex that acts at the interface between core mRNP particles and RNA polymerase II (RNAPII) and integrates transcript elongation with the regulation of alternative splicing. The chain is DBIRD complex subunit ZNF326 (znf326) from Xenopus laevis (African clawed frog).